Here is a 157-residue protein sequence, read N- to C-terminus: Probable succinate transporter subunit YjjB (157 aa).

A run of 4 helical transmembrane segments spans residues 8 to 28 (LALA…AMVF), 50 to 70 (MILM…SMLV), 87 to 107 (VFTV…TAMI), and 129 to 149 (FLTA…PGLW).

Belongs to the ThrE exporter (TC 2.A.79) family. As to quaternary structure, the transporter is composed of YjjB and YjjP.

The protein resides in the cell inner membrane. In terms of biological role, involved in succinate export with YjjP. Both proteins are required for export. This chain is Probable succinate transporter subunit YjjB, found in Escherichia coli O1:K1 / APEC.